The primary structure comprises 98 residues: DNA-binding protein Fis (98 aa).

A DNA-binding region (H-T-H motif) is located at residues 74–93 (QTKAANMMGINRGTLRKKLK).

It belongs to the transcriptional regulatory Fis family. As to quaternary structure, homodimer.

Functionally, activates ribosomal RNA transcription. Plays a direct role in upstream activation of rRNA promoters. The polypeptide is DNA-binding protein Fis (Aliivibrio fischeri (strain ATCC 700601 / ES114) (Vibrio fischeri)).